Here is a 212-residue protein sequence, read N- to C-terminus: ER lumen protein-retaining receptor 1-A (212 aa).

Over 1 to 4 (MNIF) the chain is Lumenal. A helical membrane pass occupies residues 5–24 (RFLGDISHLSAIFILLLKIW). At 25–32 (KSRSCAGI) the chain is on the cytoplasmic side. The chain crosses the membrane as a helical span at residues 33 to 52 (SGKSQLLFAIVFTARYLDLF). Residues 47 to 48 (RY) form an interaction with the K-D-E-L motif on target proteins region. Residues 53–58 (TNYISF) lie on the Lumenal side of the membrane. A helical transmembrane segment spans residues 59–79 (YNTSMKVVYVASSYATVWMIY). At 80–92 (SKFKATYDGNHDT) the chain is on the cytoplasmic side. The chain crosses the membrane as a helical span at residues 93-110 (FRVEFLIVPTAILAFLVN). Residues 111 to 116 (HDFTPL) lie on the Lumenal side of the membrane. The helical transmembrane segment at 117 to 135 (EIFWTFSIYLESVAILPQL) threads the bilayer. The Cytoplasmic segment spans residues 136–149 (FMVSKTGEAETITS). A helical transmembrane segment spans residues 150–168 (HYLFALGIYRTLYLFNWIW). The segment at 159–169 (RTLYLFNWIWR) is interaction with the K-D-E-L motif on target proteins. Over 169 to 178 (RYQFEGFFDL) the chain is Lumenal. The chain crosses the membrane as a helical span at residues 179–199 (IAIVAGLVQTVLYCDFFYLYV). Over 200–212 (TKVLKGKKLSLPA) the chain is Cytoplasmic. The important for recycling of cargo proteins with the sequence motif K-D-E-L from the Golgi to the endoplasmic reticulum stretch occupies residues 204–207 (KGKK).

It belongs to the ERD2 family.

Its subcellular location is the golgi apparatus membrane. The protein localises to the cytoplasmic vesicle. It is found in the COPI-coated vesicle membrane. It localises to the endoplasmic reticulum membrane. The protein resides in the endoplasmic reticulum-Golgi intermediate compartment membrane. Receptor for the C-terminal sequence motif K-D-E-L that is present on endoplasmic reticulum resident proteins and that mediates their recycling from the Golgi back to the endoplasmic reticulum. The chain is ER lumen protein-retaining receptor 1-A (kdelr1-a) from Xenopus laevis (African clawed frog).